A 482-amino-acid polypeptide reads, in one-letter code: Probable glycine dehydrogenase (decarboxylating) subunit 2 (482 aa).

At Lys-269 the chain carries N6-(pyridoxal phosphate)lysine.

It belongs to the GcvP family. C-terminal subunit subfamily. In terms of assembly, the glycine cleavage system is composed of four proteins: P, T, L and H. In this organism, the P 'protein' is a heterodimer of two subunits. Requires pyridoxal 5'-phosphate as cofactor.

It catalyses the reaction N(6)-[(R)-lipoyl]-L-lysyl-[glycine-cleavage complex H protein] + glycine + H(+) = N(6)-[(R)-S(8)-aminomethyldihydrolipoyl]-L-lysyl-[glycine-cleavage complex H protein] + CO2. The glycine cleavage system catalyzes the degradation of glycine. The P protein binds the alpha-amino group of glycine through its pyridoxal phosphate cofactor; CO(2) is released and the remaining methylamine moiety is then transferred to the lipoamide cofactor of the H protein. The chain is Probable glycine dehydrogenase (decarboxylating) subunit 2 from Pelodictyon phaeoclathratiforme (strain DSM 5477 / BU-1).